The chain runs to 195 residues: Nascent polypeptide-associated complex subunit alpha (195 aa).

2 disordered regions span residues 1–59 (MTGS…SRSE) and 132–153 (TREA…EEDS). Positions 7–16 (TRQKEVKEPQ) are enriched in basic and acidic residues. The span at 19-33 (VSDDSDNEAVEQELT) shows a compositional bias: acidic residues. Residues 47–59 (DHIDKQAKQSRSE) are compositionally biased toward basic and acidic residues. The NAC-A/B domain maps to 56–121 (SRSEKKARKL…AKIEDLTQHA (66 aa)). Positions 142–153 (EEDENEDVEEDS) are enriched in acidic residues.

This sequence belongs to the NAC-alpha family. As to quaternary structure, may be part of the nascent polypeptide-associated complex (NAC), which is a heterodimer of icd-2 and icd-1 (via NAC-A/B domains).

It is found in the cytoplasm. Functionally, may prevent inappropriate targeting of non-secretory polypeptides to the endoplasmic reticulum (ER). Plays a role in the response to heat stress. The polypeptide is Nascent polypeptide-associated complex subunit alpha (Caenorhabditis elegans).